The sequence spans 511 residues: Maturase K (511 aa).

It belongs to the intron maturase 2 family. MatK subfamily.

The protein resides in the plastid. It localises to the chloroplast. Usually encoded in the trnK tRNA gene intron. Probably assists in splicing its own and other chloroplast group II introns. In Primula veris (Cowslip), this protein is Maturase K.